Consider the following 207-residue polypeptide: Guanylate kinase (207 aa).

The Guanylate kinase-like domain maps to 4 to 184 (GILFIISAPS…AVNDLITIIT (181 aa)). 11 to 18 (APSGTGKS) contacts ATP.

This sequence belongs to the guanylate kinase family.

The protein localises to the cytoplasm. The enzyme catalyses GMP + ATP = GDP + ADP. Functionally, essential for recycling GMP and indirectly, cGMP. This chain is Guanylate kinase (gmk), found in Buchnera aphidicola subsp. Acyrthosiphon pisum (strain APS) (Acyrthosiphon pisum symbiotic bacterium).